The primary structure comprises 118 residues: Appetite-regulating hormone (118 aa).

Positions 1-24 (MPSTGTICSLLLLSVLLMADLAMA) are cleaved as a signal peptide. Ser27 is lipidated: O-decanoyl serine; alternate. Ser27 carries O-hexanoyl serine; alternate lipidation. The O-octanoyl serine; alternate moiety is linked to residue Ser27. Residues 29-50 (LSPEHQKVQQRKESKKPAAKLK) form a disordered region. Residues 32–44 (EHQKVQQRKESKK) show a composition bias toward basic and acidic residues. A propeptide spans 53–76 (ALEGWLGPEDSGEVEGTEDKLEIR) (removed in mature form). Leu99 carries the post-translational modification Leucine amide. Residues 100-118 (GKFLQDILWEEVTEAPADK) constitute a propeptide, removed in mature form.

The protein belongs to the motilin family. Post-translationally, O-octanoylated by GOAT/MBOAT4. O-octanoylation is essential for ghrelin activity. Amidation of Leu-99 is essential for obestatin activity.

The protein localises to the secreted. Ghrelin is the ligand for growth hormone secretagogue receptor type 1 (GHSR). Induces the release of growth hormone from the pituitary. Has an appetite-stimulating effect, induces adiposity and stimulates gastric acid secretion. Involved in growth regulation. In terms of biological role, obestatin may be the ligand for GPR39. May have an appetite-reducing effect resulting in decreased food intake. May reduce gastric emptying activity and jejunal motility. The sequence is that of Appetite-regulating hormone (GHRL) from Sus scrofa (Pig).